The following is a 280-amino-acid chain: Dexamethasone-induced Ras-related protein 1 (280 aa).

Cys11 carries the S-nitrosocysteine modification. GTP is bound at residue 31–38; the sequence is GSSKVGKT. Positions 53 to 61 match the Effector region motif; it reads YTPTIEDFH. GTP contacts are provided by residues 78–82 and 145–148; these read DTSGN and NKGD. Position 277 is a cysteine methyl ester (Cys277). Cys277 is lipidated: S-farnesyl cysteine. Positions 278 to 280 are cleaved as a propeptide — removed in mature form; sequence VIS.

It belongs to the small GTPase superfamily. RasD family. Forms a ternary complex with CAPON and NOS1. Component of a complex, at least composed of APBB1, RASD1/DEXRAS1 and APP. Interacts with APBB1/FE65. Forms. S-nitrosylation stimulates guanine-nucleotide exchange activity. As to expression, prominently found in brain at both mRNA and protein levels. Moderate expression in testis and lung. Slightly expressed in heart, spleen, skeletal muscle, liver and kidney.

The protein resides in the cell membrane. Its subcellular location is the cytoplasm. The protein localises to the perinuclear region. It is found in the nucleus. Its function is as follows. Small GTPase. Negatively regulates the transcription regulation activity of the APBB1/FE65-APP complex via its interaction with APBB1/FE65. This is Dexamethasone-induced Ras-related protein 1 (Rasd1) from Rattus norvegicus (Rat).